Here is a 132-residue protein sequence, read N- to C-terminus: MRVFKTKLIRLQLTAEELDALTADFISYKRDGVLPDIFGRDALYDDSFTWPLIKFERVAHIHLANENNPFPPQLRQFSRTNDEAHLVYCQGAFDEQAWLLIAILKPEPHKLARDNNQMHKIGKMAEAFRMRF.

As to quaternary structure, probably forms a complex with the antitoxin YafN which inhibits the mRNA interferase activity.

In terms of biological role, toxic component of a type II toxin-antitoxin (TA) system. A translation-dependent mRNA interferase. Overexpression causes cessation of cell growth and inhibits cell proliferation via inhibition of translation; this blockage is overcome by subsequent expression of antitoxin YafN. Overexpression causes cleavage of a number of mRNAs in a ribosome-dependent fashion. YafO binding to the 50S ribosomal subunit in the translation complex induces mRNA cleavage 3' to the region protected by the ribosome; YafO alone is not able to digest mRNA. This chain is mRNA interferase toxin YafO (yafO), found in Escherichia coli (strain K12).